The chain runs to 160 residues: Transcriptional repressor NrdR (160 aa).

Residues 3–34 fold into a zinc finger; it reads CPSCQNTDSRVLESRAADGGRSVRRRRECLNC. An ATP-cone domain is found at 49–139; sequence ITVIKRNGNR…VYRQFRGIDD (91 aa).

It belongs to the NrdR family. The cofactor is Zn(2+).

Functionally, negatively regulates transcription of bacterial ribonucleotide reductase nrd genes and operons by binding to NrdR-boxes. This is Transcriptional repressor NrdR from Synechococcus sp. (strain CC9605).